Here is a 160-residue protein sequence, read N- to C-terminus: Protein-export protein SecB (160 aa).

It belongs to the SecB family. As to quaternary structure, homotetramer, a dimer of dimers. One homotetramer interacts with 1 SecA dimer.

The protein localises to the cytoplasm. Its function is as follows. One of the proteins required for the normal export of preproteins out of the cell cytoplasm. It is a molecular chaperone that binds to a subset of precursor proteins, maintaining them in a translocation-competent state. It also specifically binds to its receptor SecA. This chain is Protein-export protein SecB, found in Nitrosomonas eutropha (strain DSM 101675 / C91 / Nm57).